The sequence spans 300 residues: Ribosomal protein bS6--L-glutamate ligase (300 aa).

The 184-residue stretch at methionine 104 to glutamate 287 folds into the ATP-grasp domain. ATP contacts are provided by residues lysine 141, glutamate 178–tyrosine 179, aspartate 187, and arginine 211–asparagine 213. Mg(2+) contacts are provided by aspartate 248, glutamate 260, and asparagine 262. Aspartate 248, glutamate 260, and asparagine 262 together coordinate Mn(2+).

Belongs to the RimK family. Mg(2+) is required as a cofactor. Requires Mn(2+) as cofactor.

An L-glutamate ligase that catalyzes the ATP-dependent post-translational addition of glutamate residues to the C-terminus of ribosomal protein bS6 (RpsF). Is also able to catalyze the synthesis of poly-alpha-glutamate in vitro, via ATP hydrolysis from unprotected glutamate as substrate. The number of glutamate residues added to either RpsF or to poly-alpha-glutamate changes with pH. This is Ribosomal protein bS6--L-glutamate ligase from Shigella boydii serotype 4 (strain Sb227).